Consider the following 457-residue polypeptide: Adenylosuccinate synthetase (457 aa).

Residues 40–46 (GDEGKGK) and 70–72 (GHT) contribute to the GTP site. The Proton acceptor role is filled by aspartate 41. Mg(2+) contacts are provided by aspartate 41 and glycine 70. IMP-binding positions include 41 to 44 (DEGK), 68 to 71 (NAGH), threonine 161, arginine 175, asparagine 255, threonine 270, and arginine 334. The active-site Proton donor is the histidine 71. A substrate-binding site is contributed by 330 to 336 (VTTGRKR). Residues arginine 336, 362 to 364 (KLD), and 444 to 446 (GVG) contribute to the GTP site.

It belongs to the adenylosuccinate synthetase family. Homodimer. Mg(2+) is required as a cofactor.

The protein localises to the cytoplasm. The catalysed reaction is IMP + L-aspartate + GTP = N(6)-(1,2-dicarboxyethyl)-AMP + GDP + phosphate + 2 H(+). The protein operates within purine metabolism; AMP biosynthesis via de novo pathway; AMP from IMP: step 1/2. In terms of biological role, plays an important role in the de novo pathway and in the salvage pathway of purine nucleotide biosynthesis. Catalyzes the first committed step in the biosynthesis of AMP from IMP. The protein is Adenylosuccinate synthetase of Caenorhabditis elegans.